The following is a 338-amino-acid chain: Glycerol-3-phosphate dehydrogenase [NAD(P)+] (338 aa).

NADPH is bound by residues Ser13, Trp14, and Lys108. 3 residues coordinate sn-glycerol 3-phosphate: Lys108, Gly139, and Ser141. Ala143 serves as a coordination point for NADPH. 5 residues coordinate sn-glycerol 3-phosphate: Lys194, Asp247, Ser257, Arg258, and Asn259. Lys194 serves as the catalytic Proton acceptor. An NADPH-binding site is contributed by Arg258. Positions 282 and 284 each coordinate NADPH.

Belongs to the NAD-dependent glycerol-3-phosphate dehydrogenase family.

Its subcellular location is the cytoplasm. The enzyme catalyses sn-glycerol 3-phosphate + NAD(+) = dihydroxyacetone phosphate + NADH + H(+). It catalyses the reaction sn-glycerol 3-phosphate + NADP(+) = dihydroxyacetone phosphate + NADPH + H(+). The protein operates within membrane lipid metabolism; glycerophospholipid metabolism. Its function is as follows. Catalyzes the reduction of the glycolytic intermediate dihydroxyacetone phosphate (DHAP) to sn-glycerol 3-phosphate (G3P), the key precursor for phospholipid synthesis. The sequence is that of Glycerol-3-phosphate dehydrogenase [NAD(P)+] from Streptococcus pyogenes serotype M2 (strain MGAS10270).